We begin with the raw amino-acid sequence, 73 residues long: Pollen allergen Amb t 5 (73 aa).

Residues 1-20 (MKNIFMLTLFILIITSTIKA) form the signal peptide. The propeptide occupies 21 to 33 (IGSTNEVDEIKQE). 4 disulfides stabilise this stretch: Cys38–Cys68, Cys44–Cys59, Cys51–Cys61, and Cys52–Cys72.

In terms of assembly, monomer.

The sequence is that of Pollen allergen Amb t 5 from Ambrosia trifida (Giant ragweed).